A 208-amino-acid chain; its full sequence is Holliday junction resolvase RecU (208 aa).

The disordered stretch occupies residues 1–30 (MNYPNGKPFNRNKSQVGRTHKGQTSKIDYG). Mg(2+) is bound by residues threonine 87, aspartate 89, glutamate 102, and glutamine 121.

The protein belongs to the RecU family. Mg(2+) serves as cofactor.

The protein localises to the cytoplasm. It catalyses the reaction Endonucleolytic cleavage at a junction such as a reciprocal single-stranded crossover between two homologous DNA duplexes (Holliday junction).. In terms of biological role, endonuclease that resolves Holliday junction intermediates in genetic recombination. Cleaves mobile four-strand junctions by introducing symmetrical nicks in paired strands. Promotes annealing of linear ssDNA with homologous dsDNA. Required for DNA repair, homologous recombination and chromosome segregation. This chain is Holliday junction resolvase RecU, found in Staphylococcus saprophyticus subsp. saprophyticus (strain ATCC 15305 / DSM 20229 / NCIMB 8711 / NCTC 7292 / S-41).